The following is a 472-amino-acid chain: Aspartyl/glutamyl-tRNA(Asn/Gln) amidotransferase subunit B (472 aa).

The protein belongs to the GatB/GatE family. GatB subfamily. As to quaternary structure, heterotrimer of A, B and C subunits.

The catalysed reaction is L-glutamyl-tRNA(Gln) + L-glutamine + ATP + H2O = L-glutaminyl-tRNA(Gln) + L-glutamate + ADP + phosphate + H(+). It carries out the reaction L-aspartyl-tRNA(Asn) + L-glutamine + ATP + H2O = L-asparaginyl-tRNA(Asn) + L-glutamate + ADP + phosphate + 2 H(+). Allows the formation of correctly charged Asn-tRNA(Asn) or Gln-tRNA(Gln) through the transamidation of misacylated Asp-tRNA(Asn) or Glu-tRNA(Gln) in organisms which lack either or both of asparaginyl-tRNA or glutaminyl-tRNA synthetases. The reaction takes place in the presence of glutamine and ATP through an activated phospho-Asp-tRNA(Asn) or phospho-Glu-tRNA(Gln). This is Aspartyl/glutamyl-tRNA(Asn/Gln) amidotransferase subunit B from Campylobacter jejuni subsp. jejuni serotype O:2 (strain ATCC 700819 / NCTC 11168).